Here is an 81-residue protein sequence, read N- to C-terminus: MRKLALVPIQFYRYAISPLMASHCRFYPSCSCYAYEAIENHGLLRGGWLAVRRLGRCHPWNDGGFDPVPPAPSSRTSSIAE.

The disordered stretch occupies residues 61–81 (NDGGFDPVPPAPSSRTSSIAE).

The protein belongs to the UPF0161 family.

It is found in the cell inner membrane. Its function is as follows. Could be involved in insertion of integral membrane proteins into the membrane. The polypeptide is Putative membrane protein insertion efficiency factor (Pseudomonas entomophila (strain L48)).